A 173-amino-acid polypeptide reads, in one-letter code: Shikimate kinase (173 aa).

11–16 (GAGKTT) provides a ligand contact to ATP. Thr15 is a Mg(2+) binding site. Asp33, Arg57, and Gly79 together coordinate substrate. Arg118 contributes to the ATP binding site. Residue Arg140 coordinates substrate.

This sequence belongs to the shikimate kinase family. As to quaternary structure, monomer. Mg(2+) serves as cofactor.

Its subcellular location is the cytoplasm. It carries out the reaction shikimate + ATP = 3-phosphoshikimate + ADP + H(+). The protein operates within metabolic intermediate biosynthesis; chorismate biosynthesis; chorismate from D-erythrose 4-phosphate and phosphoenolpyruvate: step 5/7. Its function is as follows. Catalyzes the specific phosphorylation of the 3-hydroxyl group of shikimic acid using ATP as a cosubstrate. The protein is Shikimate kinase of Parabacteroides distasonis (strain ATCC 8503 / DSM 20701 / CIP 104284 / JCM 5825 / NCTC 11152).